A 66-amino-acid chain; its full sequence is Large ribosomal subunit protein uL29 (66 aa).

Belongs to the universal ribosomal protein uL29 family.

In Kosmotoga olearia (strain ATCC BAA-1733 / DSM 21960 / TBF 19.5.1), this protein is Large ribosomal subunit protein uL29.